A 359-amino-acid polypeptide reads, in one-letter code: Beta-hexosaminidase (359 aa).

Substrate-binding positions include Asp-64, Arg-72, Arg-138, and 168-169 (KH). Catalysis depends on His-181, which acts as the Proton donor/acceptor. Asp-252 (nucleophile) is an active-site residue.

The protein belongs to the glycosyl hydrolase 3 family. NagZ subfamily.

It localises to the cytoplasm. It carries out the reaction Hydrolysis of terminal non-reducing N-acetyl-D-hexosamine residues in N-acetyl-beta-D-hexosaminides.. The protein operates within cell wall biogenesis; peptidoglycan recycling. Plays a role in peptidoglycan recycling by cleaving the terminal beta-1,4-linked N-acetylglucosamine (GlcNAc) from peptide-linked peptidoglycan fragments, giving rise to free GlcNAc, anhydro-N-acetylmuramic acid and anhydro-N-acetylmuramic acid-linked peptides. This is Beta-hexosaminidase from Thiobacillus denitrificans (strain ATCC 25259 / T1).